The sequence spans 1216 residues: Apical endosomal glycoprotein (1216 aa).

An N-terminal signal peptide occupies residues 1–22; the sequence is MPLSSHLLPALVLFLAGSSGWA. At 23 to 1151 the chain is on the extracellular side; the sequence is WVPNHCRSPG…SPGNTAAPGS (1129 aa). The LDL-receptor class A 1; truncated domain maps to 26–53; sequence NHCRSPGQAVCNFVCDCRDCSDEAQCGY. The 159-residue stretch at 64–222 folds into the MAM 1 domain; the sequence is FACDFEQDPC…DDLEFWDCGL (159 aa). N203 carries N-linked (GlcNAc...) asparagine glycosylation. The region spanning 228–266 is the LDL-receptor class A 2 domain; the sequence is NCPPGHHHCQNKVCVEPQQLCDGEDNCGDLSDENPLTCG. 3 disulfides stabilise this stretch: C229/C241, C236/C254, and C248/C265. The region spanning 269–425 is the MAM 2 domain; sequence IATDFETGLG…DLILSDHCRP (157 aa). A disordered region spans residues 280–307; the sequence is WNRSEGWSRNHRAGGPERPSWPRRDHSR. N-linked (GlcNAc...) asparagine glycans are attached at residues N281 and N339. Positions 429 to 455 are disordered; sequence VSTLQPLPPGPRAPAPQPLPPSSRLQD. The span at 434–449 shows a compositional bias: pro residues; the sequence is PLPPGPRAPAPQPLPP. Positions 456-491 constitute an LDL-receptor class A 3 domain; sequence SCKQGHLACGDLCVPPEQLCDFEEQCAGGEDEQACG. Intrachain disulfides connect C457–C468, C464–C481, and C475–C490. MAM domains follow at residues 491–644, 654–809, 811–969, and 971–1138; these read GTTD…DCSP, VSCN…PCWA, NYCS…PCPQ, and GSCD…HCQQ. N-linked (GlcNAc...) asparagine glycosylation is found at N583 and N636. Residue N835 is glycosylated (N-linked (GlcNAc...) asparagine). Residues 1152 to 1172 traverse the membrane as a helical segment; sequence VPAVVGSALLLLMLLVLLGLG. Topologically, residues 1173–1216 are cytoplasmic; sequence GRRWLQKKGSCPFQSNTEATAPGFDNILFNADGVTLPASVTSDP.

The protein localises to the membrane. Functionally, probably involved in the sorting and selective transport of receptors and ligands across polarized epithelia. This Homo sapiens (Human) protein is Apical endosomal glycoprotein.